Consider the following 356-residue polypeptide: sn-glycerol-3-phosphate import ATP-binding protein UgpC (356 aa).

The ABC transporter domain occupies 4–235 (LKLQAVTKSW…PASRFVASFI (232 aa)). 37–44 (GPSGCGKS) is an ATP binding site.

Belongs to the ABC transporter superfamily. sn-glycerol-3-phosphate importer (TC 3.A.1.1.3) family. In terms of assembly, the complex is composed of two ATP-binding proteins (UgpC), two transmembrane proteins (UgpA and UgpE) and a solute-binding protein (UgpB).

It is found in the cell inner membrane. The catalysed reaction is sn-glycerol 3-phosphate(out) + ATP + H2O = sn-glycerol 3-phosphate(in) + ADP + phosphate + H(+). Part of the ABC transporter complex UgpBAEC involved in sn-glycerol-3-phosphate (G3P) import. Responsible for energy coupling to the transport system. In Salmonella choleraesuis (strain SC-B67), this protein is sn-glycerol-3-phosphate import ATP-binding protein UgpC.